We begin with the raw amino-acid sequence, 360 residues long: MKTSFGLLALAAAAKLVNAHATVFAVWINDEDQGLGNTADGYIRSPPNNSPVTDVTSKDMTCNVNGATAAAKTLDVKAGDKITFEWHHNSRDASDDIIASSHLGPVMVYMAPTEKGSAGSGWVKIAEDGYSNGKWAVDTLIANRGKHSITVPDVPAGEYLFRPEIIALHEGNREGGAQLYMECVQVKVTSDGSKTLPEGVSIPGTYTATDPGILFDIYNSFDSYPIPGPAVWDGSSSGSSSGSSKTTAAAPAATSAASASSTKAPATTAAPVQTESAKPATSTTQAAAPTTLVTSAKPTATATAGAGDSGSGSCSATAPATGVVKMYAQCGGMNYSGSTTCESGLTCKQWNPYYHQCVKA.

A signal peptide spans 1-19; it reads MKTSFGLLALAAAAKLVNA. The Cu(2+) site is built by His20 and His102. Cysteines 62 and 183 form a disulfide. His169 contacts O2. Residue Tyr180 participates in Cu(2+) binding. The interval 254 to 293 is disordered; it reads TSAASASSTKAPATTAAPVQTESAKPATSTTQAAAPTTLV. One can recognise a CBM1 domain in the interval 322–358; it reads GVVKMYAQCGGMNYSGSTTCESGLTCKQWNPYYHQCV. Asn334 is a glycosylation site (N-linked (GlcNAc...) asparagine).

It belongs to the polysaccharide monooxygenase AA9 family. Cu(2+) serves as cofactor.

Its subcellular location is the secreted. It carries out the reaction [(1-&gt;4)-beta-D-glucosyl]n+m + reduced acceptor + O2 = 4-dehydro-beta-D-glucosyl-[(1-&gt;4)-beta-D-glucosyl]n-1 + [(1-&gt;4)-beta-D-glucosyl]m + acceptor + H2O.. Lytic polysaccharide monooxygenase (LPMO) that depolymerizes crystalline and amorphous polysaccharides via the oxidation of scissile alpha- or beta-(1-4)-glycosidic bonds, yielding C4 oxidation products. Catalysis by LPMOs requires the reduction of the active-site copper from Cu(II) to Cu(I) by a reducing agent and H(2)O(2) or O(2) as a cosubstrate. This is AA9 family lytic polysaccharide monooxygenase A (eglD) from Aspergillus terreus (strain NIH 2624 / FGSC A1156).